A 366-amino-acid chain; its full sequence is Homoserine O-acetyltransferase (366 aa).

The 303-residue stretch at 47–349 folds into the AB hydrolase-1 domain; sequence NAILICHALS…SGEGHDSFLL (303 aa). Serine 153 serves as the catalytic Nucleophile. Residue arginine 221 coordinates substrate. Catalysis depends on residues aspartate 311 and histidine 344. Position 345 (aspartate 345) interacts with substrate.

Belongs to the AB hydrolase superfamily. MetX family. Homodimer.

The protein localises to the cytoplasm. The catalysed reaction is L-homoserine + acetyl-CoA = O-acetyl-L-homoserine + CoA. The protein operates within amino-acid biosynthesis; L-methionine biosynthesis via de novo pathway; O-acetyl-L-homoserine from L-homoserine: step 1/1. Transfers an acetyl group from acetyl-CoA to L-homoserine, forming acetyl-L-homoserine. In Leptospira interrogans serogroup Icterohaemorrhagiae serovar copenhageni (strain Fiocruz L1-130), this protein is Homoserine O-acetyltransferase.